A 247-amino-acid chain; its full sequence is Small ribosomal subunit protein uS2 (247 aa).

This sequence belongs to the universal ribosomal protein uS2 family.

The protein is Small ribosomal subunit protein uS2 of Cupriavidus taiwanensis (strain DSM 17343 / BCRC 17206 / CCUG 44338 / CIP 107171 / LMG 19424 / R1) (Ralstonia taiwanensis (strain LMG 19424)).